A 232-amino-acid chain; its full sequence is MGQKVNPTGIRLGIVKDHRSVWYAERGAYADKLNNDLEVRRFLEQRLKNASVSDITIERPANNARITIHTARPGIVIGKKGEDVDRLRRDVSEMMGVPVHVNIEEVRKPELDAQLVAQNVCGQLERRVMFRRAMKRAVQNAMRLGAGGIKIQLSGRLGGAEIARTEWYREGRVPLHTLRADIDYATYEAHTTYGVIGVKVWVFKGEILGGIEEVRAKQKQAQAPAPKKKGSR.

One can recognise a KH type-2 domain in the interval 39–107; that stretch reads VRRFLEQRLK…PVHVNIEEVR (69 aa).

It belongs to the universal ribosomal protein uS3 family. As to quaternary structure, part of the 30S ribosomal subunit. Forms a tight complex with proteins S10 and S14.

In terms of biological role, binds the lower part of the 30S subunit head. Binds mRNA in the 70S ribosome, positioning it for translation. The chain is Small ribosomal subunit protein uS3 from Chromohalobacter salexigens (strain ATCC BAA-138 / DSM 3043 / CIP 106854 / NCIMB 13768 / 1H11).